The primary structure comprises 275 residues: 4-hydroxy-tetrahydrodipicolinate reductase (275 aa).

NAD(+) is bound by residues 13–18 (GAGGKM) and 108–110 (GTT). Catalysis depends on His164, which acts as the Proton donor/acceptor. His165 is a binding site for (S)-2,3,4,5-tetrahydrodipicolinate. The active-site Proton donor is the Lys168. Residue 174–175 (GT) participates in (S)-2,3,4,5-tetrahydrodipicolinate binding.

It belongs to the DapB family.

The protein resides in the cytoplasm. It carries out the reaction (S)-2,3,4,5-tetrahydrodipicolinate + NAD(+) + H2O = (2S,4S)-4-hydroxy-2,3,4,5-tetrahydrodipicolinate + NADH + H(+). It catalyses the reaction (S)-2,3,4,5-tetrahydrodipicolinate + NADP(+) + H2O = (2S,4S)-4-hydroxy-2,3,4,5-tetrahydrodipicolinate + NADPH + H(+). It functions in the pathway amino-acid biosynthesis; L-lysine biosynthesis via DAP pathway; (S)-tetrahydrodipicolinate from L-aspartate: step 4/4. Its function is as follows. Catalyzes the conversion of 4-hydroxy-tetrahydrodipicolinate (HTPA) to tetrahydrodipicolinate. The chain is 4-hydroxy-tetrahydrodipicolinate reductase from Picosynechococcus sp. (strain ATCC 27264 / PCC 7002 / PR-6) (Agmenellum quadruplicatum).